A 293-amino-acid polypeptide reads, in one-letter code: Protease HtpX (293 aa).

2 consecutive transmembrane segments (helical) span residues 4 to 24 and 34 to 54; these read IALF…VLSL and GLMI…LLMS. Histidine 139 is a binding site for Zn(2+). Glutamate 140 is a catalytic residue. Residue histidine 143 participates in Zn(2+) binding. The next 2 helical transmembrane spans lie at 158 to 178 and 193 to 213; these read VVNT…AGFM and LIYF…ASII. A Zn(2+)-binding site is contributed by glutamate 222.

The protein belongs to the peptidase M48B family. Requires Zn(2+) as cofactor.

It is found in the cell inner membrane. The protein is Protease HtpX of Escherichia fergusonii (strain ATCC 35469 / DSM 13698 / CCUG 18766 / IAM 14443 / JCM 21226 / LMG 7866 / NBRC 102419 / NCTC 12128 / CDC 0568-73).